The chain runs to 225 residues: ATP-dependent Clp protease proteolytic subunit (225 aa).

Serine 123 acts as the Nucleophile in catalysis. Histidine 148 is a catalytic residue.

The protein belongs to the peptidase S14 family. Fourteen ClpP subunits assemble into 2 heptameric rings which stack back to back to give a disk-like structure with a central cavity, resembling the structure of eukaryotic proteasomes.

The protein resides in the cytoplasm. It carries out the reaction Hydrolysis of proteins to small peptides in the presence of ATP and magnesium. alpha-casein is the usual test substrate. In the absence of ATP, only oligopeptides shorter than five residues are hydrolyzed (such as succinyl-Leu-Tyr-|-NHMec, and Leu-Tyr-Leu-|-Tyr-Trp, in which cleavage of the -Tyr-|-Leu- and -Tyr-|-Trp bonds also occurs).. Cleaves peptides in various proteins in a process that requires ATP hydrolysis. Has a chymotrypsin-like activity. Plays a major role in the degradation of misfolded proteins. The protein is ATP-dependent Clp protease proteolytic subunit of Chlorobaculum tepidum (strain ATCC 49652 / DSM 12025 / NBRC 103806 / TLS) (Chlorobium tepidum).